A 148-amino-acid polypeptide reads, in one-letter code: Methylated-DNA--protein-cysteine methyltransferase (148 aa).

Cys90 acts as the Nucleophile; methyl group acceptor in catalysis.

It belongs to the MGMT family.

The protein resides in the cytoplasm. It carries out the reaction a 6-O-methyl-2'-deoxyguanosine in DNA + L-cysteinyl-[protein] = S-methyl-L-cysteinyl-[protein] + a 2'-deoxyguanosine in DNA. The enzyme catalyses a 4-O-methyl-thymidine in DNA + L-cysteinyl-[protein] = a thymidine in DNA + S-methyl-L-cysteinyl-[protein]. Functionally, involved in the cellular defense against the biological effects of O6-methylguanine (O6-MeG) and O4-methylthymine (O4-MeT) in DNA. Repairs the methylated nucleobase in DNA by stoichiometrically transferring the methyl group to a cysteine residue in the enzyme. This is a suicide reaction: the enzyme is irreversibly inactivated. This is Methylated-DNA--protein-cysteine methyltransferase (ogt) from Pyrobaculum aerophilum (strain ATCC 51768 / DSM 7523 / JCM 9630 / CIP 104966 / NBRC 100827 / IM2).